Here is a 273-residue protein sequence, read N- to C-terminus: HMP-PP phosphatase (273 aa).

Catalysis depends on Asp8, which acts as the Nucleophile. Residues Asp8, Asp10, and Asp212 each coordinate Mg(2+).

Belongs to the HAD-like hydrolase superfamily. Cof family. The cofactor is Mg(2+).

The catalysed reaction is 4-amino-2-methyl-5-(diphosphooxymethyl)pyrimidine + H2O = 4-amino-2-methyl-5-(phosphooxymethyl)pyrimidine + phosphate + H(+). Functionally, catalyzes the hydrolysis of 4-amino-2-methyl-5-hydroxymethylpyrimidine pyrophosphate (HMP-PP) to 4-amino-2-methyl-5-hydroxymethylpyrimidine phosphate (HMP-P). This Yersinia enterocolitica serotype O:8 / biotype 1B (strain NCTC 13174 / 8081) protein is HMP-PP phosphatase.